The following is a 123-amino-acid chain: WAP four-disulfide core domain protein 5 (123 aa).

Residues 1–24 form the signal peptide; sequence MRFGRLLLLAVLLAGVSQLPAVSG. 2 WAP domains span residues 27-74 and 75-121; these read KGEK…IPRV and SVKL…RDPV. Disulfide bonds link cysteine 34-cysteine 62, cysteine 41-cysteine 66, cysteine 49-cysteine 61, cysteine 55-cysteine 70, cysteine 81-cysteine 109, cysteine 88-cysteine 113, cysteine 96-cysteine 108, and cysteine 102-cysteine 117.

It localises to the secreted. Putative acid-stable proteinase inhibitor. The polypeptide is WAP four-disulfide core domain protein 5 (WFDC5) (Otolemur garnettii (Small-eared galago)).